A 131-amino-acid chain; its full sequence is Cyclin-dependent kinase 4 inhibitor B (131 aa).

ANK repeat units lie at residues 6-35, 39-67, 72-101, and 105-131; these read GGDADLANAAARGQVEAVRQLLEAGVDPNR, FGRRPIQVMMMGSARVAELLLLHGADPNC, TLTRPVHDAAREGFLDTLVALHRAGGRLDV, and WGRLPVDLAEERGHRDVARYLRATAGD.

It belongs to the CDKN2 cyclin-dependent kinase inhibitor family. As to quaternary structure, heterodimer of CDKN2B with CDK4 or CDK6.

In terms of biological role, interacts strongly with CDK4 and CDK6. Potent inhibitor. Potential effector of TGF-beta induced cell cycle arrest. The chain is Cyclin-dependent kinase 4 inhibitor B (CDKN2B) from Bos taurus (Bovine).